The chain runs to 269 residues: Tryptophan synthase alpha chain (269 aa).

Catalysis depends on proton acceptor residues Glu49 and Asp60.

It belongs to the TrpA family. Tetramer of two alpha and two beta chains.

The enzyme catalyses (1S,2R)-1-C-(indol-3-yl)glycerol 3-phosphate + L-serine = D-glyceraldehyde 3-phosphate + L-tryptophan + H2O. It participates in amino-acid biosynthesis; L-tryptophan biosynthesis; L-tryptophan from chorismate: step 5/5. Its function is as follows. The alpha subunit is responsible for the aldol cleavage of indoleglycerol phosphate to indole and glyceraldehyde 3-phosphate. In Buchnera aphidicola subsp. Schlechtendalia chinensis, this protein is Tryptophan synthase alpha chain.